The sequence spans 538 residues: Bifunctional purine biosynthesis protein PurH (538 aa).

The 151-residue stretch at 8 to 158 folds into the MGS-like domain; that stretch reads FPIPDLHRVR…KNHVYTGVIT (151 aa).

It belongs to the PurH family.

The enzyme catalyses (6R)-10-formyltetrahydrofolate + 5-amino-1-(5-phospho-beta-D-ribosyl)imidazole-4-carboxamide = 5-formamido-1-(5-phospho-D-ribosyl)imidazole-4-carboxamide + (6S)-5,6,7,8-tetrahydrofolate. It catalyses the reaction IMP + H2O = 5-formamido-1-(5-phospho-D-ribosyl)imidazole-4-carboxamide. It participates in purine metabolism; IMP biosynthesis via de novo pathway; 5-formamido-1-(5-phospho-D-ribosyl)imidazole-4-carboxamide from 5-amino-1-(5-phospho-D-ribosyl)imidazole-4-carboxamide (10-formyl THF route): step 1/1. The protein operates within purine metabolism; IMP biosynthesis via de novo pathway; IMP from 5-formamido-1-(5-phospho-D-ribosyl)imidazole-4-carboxamide: step 1/1. The chain is Bifunctional purine biosynthesis protein PurH from Bartonella henselae (strain ATCC 49882 / DSM 28221 / CCUG 30454 / Houston 1) (Rochalimaea henselae).